The sequence spans 517 residues: UPF0522 protein B (517 aa).

Residues 1–19 (MNKTIILLLISIIFEIVIS) form the signal peptide. Residues asparagine 148, asparagine 245, asparagine 333, asparagine 345, asparagine 370, asparagine 423, asparagine 432, and asparagine 495 are each glycosylated (N-linked (GlcNAc...) asparagine).

This sequence belongs to the UPF0522 family.

Its subcellular location is the secreted. This chain is UPF0522 protein B, found in Dictyostelium discoideum (Social amoeba).